We begin with the raw amino-acid sequence, 639 residues long: Polyvinylalcohol dehydrogenase (639 aa).

A signal peptide spans 1-33; sequence MQQNIERNQVSMTTSRFVWGAVMALVALGSASA. One can recognise a Cytochrome c domain in the interval 36–152; sequence LNLPDGAALY…TPDQWNGWGA (117 aa). Residues cysteine 49, cysteine 52, and histidine 53 each contribute to the heme site.

The protein belongs to the bacterial PQQ dehydrogenase family. In terms of assembly, monomer. Pyrroloquinoline quinone serves as cofactor.

It localises to the cytoplasm. The enzyme catalyses a polyvinyl alcohol + 2n Fe(III)-[cytochrome c] = an oxidized polyvinyl alcohol + 2n Fe(II)-[cytochrome c] + 2n H(+). Functionally, catalyzes the oxidation of polyvinyl alcohol (PVA) in the polyvinyl alcohol degradation pathway. The polypeptide is Polyvinylalcohol dehydrogenase (pvaA) (Pseudomonas sp).